Reading from the N-terminus, the 92-residue chain is Small ribosomal subunit protein uS19 (92 aa).

Belongs to the universal ribosomal protein uS19 family.

Protein S19 forms a complex with S13 that binds strongly to the 16S ribosomal RNA. This is Small ribosomal subunit protein uS19 from Rhodospirillum rubrum (strain ATCC 11170 / ATH 1.1.1 / DSM 467 / LMG 4362 / NCIMB 8255 / S1).